Consider the following 223-residue polypeptide: uncharacterized protein (223 aa).

This is an uncharacterized protein from Dryophytes versicolor (chameleon treefrog).